A 258-amino-acid chain; its full sequence is Granzyme A (258 aa).

The signal sequence occupies residues Met1 to Cys26. Positions Glu27–Gly28 are cleaved as a propeptide — activation peptide. Residues Ile29–Ala255 form the Peptidase S1 domain. Cys52 and Cys68 form a disulfide bridge. Residues His67 and Asp112 each act as charge relay system in the active site. Cystine bridges form between Cys146–Cys217, Cys178–Cys196, and Cys207–Cys230. N-linked (GlcNAc...) asparagine glycosylation occurs at Asn169. Ser211 acts as the Charge relay system in catalysis.

Belongs to the peptidase S1 family. Granzyme subfamily. As to quaternary structure, homodimer; disulfide-linked. Interacts with APEX1.

Its subcellular location is the secreted. The protein localises to the cytoplasmic granule. It catalyses the reaction Hydrolysis of proteins, including fibronectin, type IV collagen and nucleolin. Preferential cleavage: -Arg-|-Xaa-, -Lys-|-Xaa- &gt;&gt; -Phe-|-Xaa- in small molecule substrates.. Abundant protease in the cytosolic granules of cytotoxic T-cells and NK-cells which activates caspase-independent pyroptosis when delivered into the target cell through the immunological synapse. It cleaves after Lys or Arg. Cleaves APEX1 after 'Lys-31' and destroys its oxidative repair activity. Cleaves the nucleosome assembly protein SET after 'Lys-189', which disrupts its nucleosome assembly activity and allows the SET complex to translocate into the nucleus to nick and degrade the DNA. This is Granzyme A (GZMA) from Bos taurus (Bovine).